Here is a 90-residue protein sequence, read N- to C-terminus: Small ribosomal subunit protein bS16 (90 aa).

Belongs to the bacterial ribosomal protein bS16 family.

The polypeptide is Small ribosomal subunit protein bS16 (Lysinibacillus sphaericus (strain C3-41)).